A 210-amino-acid chain; its full sequence is Probable glutathione peroxidase 8 (210 aa).

The helical transmembrane segment at 21 to 40 threads the bilayer; the sequence is VLLSMTVGVGCLLLLQTQLL.

Belongs to the glutathione peroxidase family.

Its subcellular location is the membrane. The catalysed reaction is 2 glutathione + H2O2 = glutathione disulfide + 2 H2O. This is Probable glutathione peroxidase 8 (gpx8) from Tetraodon nigroviridis (Spotted green pufferfish).